A 76-amino-acid polypeptide reads, in one-letter code: Exodeoxyribonuclease 7 small subunit (76 aa).

It belongs to the XseB family. Heterooligomer composed of large and small subunits.

The protein localises to the cytoplasm. The catalysed reaction is Exonucleolytic cleavage in either 5'- to 3'- or 3'- to 5'-direction to yield nucleoside 5'-phosphates.. Bidirectionally degrades single-stranded DNA into large acid-insoluble oligonucleotides, which are then degraded further into small acid-soluble oligonucleotides. The chain is Exodeoxyribonuclease 7 small subunit from Arthrobacter sp. (strain FB24).